Here is a 396-residue protein sequence, read N- to C-terminus: Elongation factor Tu (396 aa).

The region spanning 10 to 206 (KPHVNVGTIG…ALDTYIPTPE (197 aa)) is the tr-type G domain. Positions 19–26 (GHVDHGKT) are G1. 19-26 (GHVDHGKT) is a binding site for GTP. Threonine 26 is a Mg(2+) binding site. The G2 stretch occupies residues 60-64 (GITIN). The tract at residues 81 to 84 (DCPG) is G3. GTP contacts are provided by residues 81 to 85 (DCPGH) and 136 to 139 (NKCD). Positions 136–139 (NKCD) are G4. Positions 174 to 176 (SAK) are G5.

The protein belongs to the TRAFAC class translation factor GTPase superfamily. Classic translation factor GTPase family. EF-Tu/EF-1A subfamily. In terms of assembly, monomer.

It is found in the cytoplasm. It catalyses the reaction GTP + H2O = GDP + phosphate + H(+). Its function is as follows. GTP hydrolase that promotes the GTP-dependent binding of aminoacyl-tRNA to the A-site of ribosomes during protein biosynthesis. This chain is Elongation factor Tu, found in Burkholderia cenocepacia (strain HI2424).